A 61-amino-acid polypeptide reads, in one-letter code: Small ribosomal subunit protein uS14 (61 aa).

Cys24, Cys27, Cys40, and Cys43 together coordinate Zn(2+).

Belongs to the universal ribosomal protein uS14 family. Zinc-binding uS14 subfamily. Part of the 30S ribosomal subunit. Contacts proteins S3 and S10. The cofactor is Zn(2+).

In terms of biological role, binds 16S rRNA, required for the assembly of 30S particles and may also be responsible for determining the conformation of the 16S rRNA at the A site. This chain is Small ribosomal subunit protein uS14, found in Roseiflexus castenholzii (strain DSM 13941 / HLO8).